Reading from the N-terminus, the 416-residue chain is Alpha-1,3/1,6-mannosyltransferase ALG2 (416 aa).

At 1–84 (MAEEQGRERD…LPRGLGWGGR (84 aa)) the chain is on the cytoplasmic side. Residues 85-105 (GAAVCAYVRMVFLALYVLFLA) constitute an intramembrane region (helical). Topologically, residues 106 to 416 (DEEFDVVVCD…LYRYVTKLLV (311 aa)) are cytoplasmic.

It belongs to the glycosyltransferase group 1 family. Glycosyltransferase 4 subfamily.

It is found in the endoplasmic reticulum membrane. The enzyme catalyses a beta-D-Man-(1-&gt;4)-beta-D-GlcNAc-(1-&gt;4)-alpha-D-GlcNAc-diphospho-di-trans,poly-cis-dolichol + GDP-alpha-D-mannose = an alpha-D-Man-(1-&gt;3)-beta-D-Man-(1-&gt;4)-beta-D-GlcNAc-(1-&gt;4)-alpha-D-GlcNAc-diphospho-di-trans,poly-cis-dolichol + GDP + H(+). It carries out the reaction an alpha-D-Man-(1-&gt;3)-beta-D-Man-(1-&gt;4)-beta-D-GlcNAc-(1-&gt;4)-alpha-D-GlcNAc-diphospho-di-trans,poly-cis-dolichol + GDP-alpha-D-mannose = an alpha-D-Man-(1-&gt;3)-[alpha-D-Man-(1-&gt;6)]-beta-D-Man-(1-&gt;4)-beta-D-GlcNAc-(1-&gt;4)-alpha-D-GlcNAc-diphospho-di-trans,poly-cis-dolichol + GDP + H(+). It catalyses the reaction a beta-D-Man-(1-&gt;4)-beta-D-GlcNAc-(1-&gt;4)-alpha-D-GlcNAc-diphospho-di-trans,poly-cis-dolichol + GDP-alpha-D-mannose = an alpha-D-Man-(1-&gt;6)-beta-D-Man-(1-&gt;4)-beta-D-GlcNAc-(1-&gt;4)-alpha-D-GlcNAc-diphospho-di-trans,poly-cis-dolichol + GDP + H(+). The catalysed reaction is an alpha-D-Man-(1-&gt;6)-beta-D-Man-(1-&gt;4)-beta-D-GlcNAc-(1-&gt;4)-alpha-D-GlcNAc-diphospho-di-trans,poly-cis-dolichol + GDP-alpha-D-mannose = an alpha-D-Man-(1-&gt;3)-[alpha-D-Man-(1-&gt;6)]-beta-D-Man-(1-&gt;4)-beta-D-GlcNAc-(1-&gt;4)-alpha-D-GlcNAc-diphospho-di-trans,poly-cis-dolichol + GDP + H(+). It participates in protein modification; protein glycosylation. In terms of biological role, mannosyltransferase that operates in the biosynthetic pathway of dolichol-linked oligosaccharides, the glycan precursors employed in protein asparagine (N)-glycosylation. The assembly of dolichol-linked oligosaccharides begins on the cytosolic side of the endoplasmic reticulum membrane and finishes in its lumen. The sequential addition of sugars to dolichol pyrophosphate produces dolichol-linked oligosaccharides containing fourteen sugars, including two GlcNAcs, nine mannoses and three glucoses. Once assembled, the oligosaccharide is transferred from the lipid to nascent proteins by oligosaccharyltransferases. Catalyzes, on the cytoplasmic face of the endoplasmic reticulum, the addition of the second and third mannose residues to the dolichol-linked oligosaccharide chain, to produce Man3GlcNAc(2)-PP-dolichol core oligosaccharide. Man3GlcNAc(2)-PP-dolichol is a substrate for ALG11, the following enzyme in the biosynthetic pathway. While both alpha 1,3 and alpha 1,6 linkages are possible, the sequential addition of alpha 1,3 followed by alpha 1,6 is probably the preferred route. This chain is Alpha-1,3/1,6-mannosyltransferase ALG2 (ALG2), found in Homo sapiens (Human).